The primary structure comprises 144 residues: Putative sugar phosphate isomerase RT0290 (144 aa).

Residue His-12 coordinates substrate. The Proton donor role is filled by His-101. Position 135 (Arg-135) interacts with substrate.

It belongs to the LacAB/RpiB family.

This Rickettsia typhi (strain ATCC VR-144 / Wilmington) protein is Putative sugar phosphate isomerase RT0290.